The sequence spans 454 residues: Bifunctional protein GlmU (454 aa).

Residues 1 to 228 (MTLPLHVVIL…PQDVEGANDP (228 aa)) form a pyrophosphorylase region. UDP-N-acetyl-alpha-D-glucosamine contacts are provided by residues 10-13 (LAAG), Lys-24, Gln-76, 81-82 (GT), 103-105 (YGD), Gly-138, Glu-153, Asn-168, and Asn-226. A Mg(2+)-binding site is contributed by Asp-105. Position 226 (Asn-226) interacts with Mg(2+). Residues 229–249 (WQLAQLERAWQLRAARALCLQ) form a linker region. The segment at 250–454 (GVRMADPARV…IEGWERPKKK (205 aa)) is N-acetyltransferase. 2 residues coordinate UDP-N-acetyl-alpha-D-glucosamine: Arg-332 and Lys-350. The active-site Proton acceptor is the His-362. Residues Tyr-365 and Asn-376 each contribute to the UDP-N-acetyl-alpha-D-glucosamine site. Acetyl-CoA-binding positions include Ala-379, 385-386 (NY), Ser-404, Ala-422, and Arg-439.

This sequence in the N-terminal section; belongs to the N-acetylglucosamine-1-phosphate uridyltransferase family. The protein in the C-terminal section; belongs to the transferase hexapeptide repeat family. In terms of assembly, homotrimer. Mg(2+) is required as a cofactor.

The protein resides in the cytoplasm. It catalyses the reaction alpha-D-glucosamine 1-phosphate + acetyl-CoA = N-acetyl-alpha-D-glucosamine 1-phosphate + CoA + H(+). The catalysed reaction is N-acetyl-alpha-D-glucosamine 1-phosphate + UTP + H(+) = UDP-N-acetyl-alpha-D-glucosamine + diphosphate. It participates in nucleotide-sugar biosynthesis; UDP-N-acetyl-alpha-D-glucosamine biosynthesis; N-acetyl-alpha-D-glucosamine 1-phosphate from alpha-D-glucosamine 6-phosphate (route II): step 2/2. The protein operates within nucleotide-sugar biosynthesis; UDP-N-acetyl-alpha-D-glucosamine biosynthesis; UDP-N-acetyl-alpha-D-glucosamine from N-acetyl-alpha-D-glucosamine 1-phosphate: step 1/1. It functions in the pathway bacterial outer membrane biogenesis; LPS lipid A biosynthesis. Catalyzes the last two sequential reactions in the de novo biosynthetic pathway for UDP-N-acetylglucosamine (UDP-GlcNAc). The C-terminal domain catalyzes the transfer of acetyl group from acetyl coenzyme A to glucosamine-1-phosphate (GlcN-1-P) to produce N-acetylglucosamine-1-phosphate (GlcNAc-1-P), which is converted into UDP-GlcNAc by the transfer of uridine 5-monophosphate (from uridine 5-triphosphate), a reaction catalyzed by the N-terminal domain. This chain is Bifunctional protein GlmU, found in Xanthomonas campestris pv. campestris (strain B100).